The sequence spans 229 residues: Octanoyltransferase (229 aa).

In terms of domain architecture, BPL/LPL catalytic spans 45-220; sequence ATAVDELWVV…ELARQFCFVL (176 aa). Residues 84 to 91, 151 to 153, and 164 to 166 contribute to the substrate site; these read RGGQVTYH, ALG, and GVA. The active-site Acyl-thioester intermediate is C182.

The protein belongs to the LipB family.

It is found in the cytoplasm. The catalysed reaction is octanoyl-[ACP] + L-lysyl-[protein] = N(6)-octanoyl-L-lysyl-[protein] + holo-[ACP] + H(+). It functions in the pathway protein modification; protein lipoylation via endogenous pathway; protein N(6)-(lipoyl)lysine from octanoyl-[acyl-carrier-protein]: step 1/2. Its function is as follows. Catalyzes the transfer of endogenously produced octanoic acid from octanoyl-acyl-carrier-protein onto the lipoyl domains of lipoate-dependent enzymes. Lipoyl-ACP can also act as a substrate although octanoyl-ACP is likely to be the physiological substrate. The protein is Octanoyltransferase of Xylella fastidiosa (strain 9a5c).